Reading from the N-terminus, the 763-residue chain is Phosphoglycerol transferase I (763 aa).

Helical transmembrane passes span 1 to 21, 26 to 46, 77 to 97, and 108 to 128; these read MSEL…AWKA, WWFA…ITLF, ILPG…LGWI, and FGYS…SPAF.

It belongs to the OpgB family.

Its subcellular location is the cell inner membrane. It carries out the reaction a phosphatidylglycerol + a membrane-derived-oligosaccharide D-glucose = a 1,2-diacyl-sn-glycerol + a membrane-derived-oligosaccharide 6-(glycerophospho)-D-glucose.. The protein operates within glycan metabolism; osmoregulated periplasmic glucan (OPG) biosynthesis. Its function is as follows. Transfers a phosphoglycerol residue from phosphatidylglycerol to the membrane-bound nascent glucan backbones. The polypeptide is Phosphoglycerol transferase I (Escherichia coli O7:K1 (strain IAI39 / ExPEC)).